Here is a 316-residue protein sequence, read N- to C-terminus: Transaldolase (316 aa).

Lysine 131 acts as the Schiff-base intermediate with substrate in catalysis.

This sequence belongs to the transaldolase family. Type 1 subfamily. In terms of assembly, homodimer.

The protein localises to the cytoplasm. It carries out the reaction D-sedoheptulose 7-phosphate + D-glyceraldehyde 3-phosphate = D-erythrose 4-phosphate + beta-D-fructose 6-phosphate. The protein operates within carbohydrate degradation; pentose phosphate pathway; D-glyceraldehyde 3-phosphate and beta-D-fructose 6-phosphate from D-ribose 5-phosphate and D-xylulose 5-phosphate (non-oxidative stage): step 2/3. Its function is as follows. Transaldolase is important for the balance of metabolites in the pentose-phosphate pathway. In Buchnera aphidicola subsp. Baizongia pistaciae (strain Bp), this protein is Transaldolase.